The chain runs to 40 residues: Photosystem II reaction center protein J (40 aa).

Residues 8 to 28 (IPLWLIGTVTGIAVIGLIGVF) form a helical membrane-spanning segment.

It belongs to the PsbJ family. PSII is composed of 1 copy each of membrane proteins PsbA, PsbB, PsbC, PsbD, PsbE, PsbF, PsbH, PsbI, PsbJ, PsbK, PsbL, PsbM, PsbT, PsbX, PsbY, PsbZ, Psb30/Ycf12, at least 3 peripheral proteins of the oxygen-evolving complex and a large number of cofactors. It forms dimeric complexes.

It is found in the plastid. Its subcellular location is the chloroplast thylakoid membrane. One of the components of the core complex of photosystem II (PSII). PSII is a light-driven water:plastoquinone oxidoreductase that uses light energy to abstract electrons from H(2)O, generating O(2) and a proton gradient subsequently used for ATP formation. It consists of a core antenna complex that captures photons, and an electron transfer chain that converts photonic excitation into a charge separation. In Oryza nivara (Indian wild rice), this protein is Photosystem II reaction center protein J.